The primary structure comprises 350 residues: MLYNIARPLLFSLDPETAHELSLAALHFFGRVLPAATPTESDPVDVMGLHFPNRIGLAAGLDKNGEAIDGLARLGFGFLEIGTITPRPQPGNPRPRMFRLPEVRAIINRMGFNNHGVDALVANVRAAKYRGILGINIGKNFDTPIDRAADDYLACLDKVYALASYVTVNISSPNTKNLRQLQGESELDDLLGRLKARQQQLADRHGRYVPLTLKIAPDLEPAQVTNIADALRRHRIDGVIATNTTIARDKVQGVRYAEQQGGLSGAPVFEASTAVVAQLSRALAGELPIIAAGGILDGRGARAKLAAGASLVQVYSGLIYRGPSLIAECVRATTDFADSGHAATSASFGA.

Residues 59–63 and Thr-83 each bind FMN; that span reads AGLDK. Substrate is bound at residue Lys-63. Residue 108 to 112 coordinates substrate; the sequence is NRMGF. 2 residues coordinate FMN: Asn-136 and Asn-169. Asn-169 contributes to the substrate binding site. The active-site Nucleophile is the Ser-172. Residue Asn-174 coordinates substrate. FMN contacts are provided by Lys-214 and Thr-242. 243 to 244 serves as a coordination point for substrate; that stretch reads NT. Residues Gly-265, Gly-294, and 315–316 each bind FMN; that span reads YS.

It belongs to the dihydroorotate dehydrogenase family. Type 2 subfamily. As to quaternary structure, monomer. The cofactor is FMN.

It is found in the cell membrane. The catalysed reaction is (S)-dihydroorotate + a quinone = orotate + a quinol. It participates in pyrimidine metabolism; UMP biosynthesis via de novo pathway; orotate from (S)-dihydroorotate (quinone route): step 1/1. Functionally, catalyzes the conversion of dihydroorotate to orotate with quinone as electron acceptor. This Aromatoleum aromaticum (strain DSM 19018 / LMG 30748 / EbN1) (Azoarcus sp. (strain EbN1)) protein is Dihydroorotate dehydrogenase (quinone).